A 159-amino-acid chain; its full sequence is MPELKIKTEKVEKQLTKEPLVLKTPKEKIDNLGKFYATGKRKNAIARVWLKVGKGKIVVNKKTIAQYFPSETYVKTILQPFVLTKTIDQYDIICTVRGGGISGQKGAILHGISKALDKSAPDFRAILRKGGLLTRDSRVVERKKYGQRKARKKTQFSKR.

Belongs to the universal ribosomal protein uS9 family.

This Rickettsia rickettsii (strain Iowa) protein is Small ribosomal subunit protein uS9.